A 511-amino-acid chain; its full sequence is Exodeoxyribonuclease 7 large subunit (511 aa).

Belongs to the XseA family. Heterooligomer composed of large and small subunits.

It is found in the cytoplasm. The catalysed reaction is Exonucleolytic cleavage in either 5'- to 3'- or 3'- to 5'-direction to yield nucleoside 5'-phosphates.. In terms of biological role, bidirectionally degrades single-stranded DNA into large acid-insoluble oligonucleotides, which are then degraded further into small acid-soluble oligonucleotides. The sequence is that of Exodeoxyribonuclease 7 large subunit from Brucella ovis (strain ATCC 25840 / 63/290 / NCTC 10512).